The following is a 313-amino-acid chain: MMIINNQIHYPVLLKEVIENLITTKDGIYLDLTIGFGGHSYNIIKILDQKARLIGFDQDLKAIAHCNQLFSEFNNVSLINDNFVNLKKHLQLMQIDNIDGCLIDLGVSSYQLDQADRGFSYHSLGRLDMRMDQNKAVDATKLIQNSTVSELVKIMKNYGEIKDPYRVVVALKKAFEKKELNTLEVVELIKKHVNKAELYANKHPARRYFQALRIAVNNELEVLEKLLSYLPSYLNKGGKIAIITFHSLEEKIVKKVFRHLASISSLNNLPINNELLKKYHNHFNKGLSPTQSELETNRRSRSAKLFVLEKINN.

S-adenosyl-L-methionine-binding positions include G37–H39, D57, F83, D104, and Q111.

Belongs to the methyltransferase superfamily. RsmH family.

The protein localises to the cytoplasm. The enzyme catalyses cytidine(1402) in 16S rRNA + S-adenosyl-L-methionine = N(4)-methylcytidine(1402) in 16S rRNA + S-adenosyl-L-homocysteine + H(+). Functionally, specifically methylates the N4 position of cytidine in position 1402 (C1402) of 16S rRNA. This Mycoplasmoides gallisepticum (strain R(low / passage 15 / clone 2)) (Mycoplasma gallisepticum) protein is Ribosomal RNA small subunit methyltransferase H.